The sequence spans 550 residues: Glucose-6-phosphate isomerase 2 (550 aa).

The active-site Proton donor is the Glu357. Active-site residues include His388 and Lys514. A disordered region spans residues Asp527–Lys550.

It belongs to the GPI family.

It localises to the cytoplasm. It catalyses the reaction alpha-D-glucose 6-phosphate = beta-D-fructose 6-phosphate. It participates in carbohydrate biosynthesis; gluconeogenesis. The protein operates within carbohydrate degradation; glycolysis; D-glyceraldehyde 3-phosphate and glycerone phosphate from D-glucose: step 2/4. In terms of biological role, catalyzes the reversible isomerization of glucose-6-phosphate to fructose-6-phosphate. The polypeptide is Glucose-6-phosphate isomerase 2 (Chromobacterium violaceum (strain ATCC 12472 / DSM 30191 / JCM 1249 / CCUG 213 / NBRC 12614 / NCIMB 9131 / NCTC 9757 / MK)).